The primary structure comprises 427 residues: Glutamate-1-semialdehyde 2,1-aminomutase (427 aa).

Residue K267 is modified to N6-(pyridoxal phosphate)lysine.

Belongs to the class-III pyridoxal-phosphate-dependent aminotransferase family. HemL subfamily. In terms of assembly, homodimer. Pyridoxal 5'-phosphate serves as cofactor.

The protein resides in the cytoplasm. It carries out the reaction (S)-4-amino-5-oxopentanoate = 5-aminolevulinate. It participates in porphyrin-containing compound metabolism; protoporphyrin-IX biosynthesis; 5-aminolevulinate from L-glutamyl-tRNA(Glu): step 2/2. The protein is Glutamate-1-semialdehyde 2,1-aminomutase of Sulfurihydrogenibium azorense (strain DSM 15241 / OCM 825 / Az-Fu1).